The sequence spans 324 residues: Ferrochelatase (324 aa).

Residues H197 and E278 each contribute to the Fe cation site.

Belongs to the ferrochelatase family.

It localises to the cytoplasm. The catalysed reaction is heme b + 2 H(+) = protoporphyrin IX + Fe(2+). The protein operates within porphyrin-containing compound metabolism; protoheme biosynthesis; protoheme from protoporphyrin-IX: step 1/1. Catalyzes the ferrous insertion into protoporphyrin IX. The chain is Ferrochelatase from Aeromonas hydrophila subsp. hydrophila (strain ATCC 7966 / DSM 30187 / BCRC 13018 / CCUG 14551 / JCM 1027 / KCTC 2358 / NCIMB 9240 / NCTC 8049).